The following is a 398-amino-acid chain: Cysteine desulfurase (398 aa).

Pyridoxal 5'-phosphate contacts are provided by residues glycine 74–threonine 75, asparagine 155, glutamine 182, and cysteine 202–histidine 204. Residue lysine 205 is modified to N6-(pyridoxal phosphate)lysine. Residues glycine 230–alanine 244 are compositionally biased toward basic and acidic residues. The tract at residues glycine 230–alanine 253 is disordered. The active-site Cysteine persulfide intermediate is the cysteine 327. Cysteine 327 lines the [2Fe-2S] cluster pocket.

This sequence belongs to the class-V pyridoxal-phosphate-dependent aminotransferase family. NifS/IscS subfamily. In terms of assembly, homodimer. Pyridoxal 5'-phosphate serves as cofactor.

The catalysed reaction is (sulfur carrier)-H + L-cysteine = (sulfur carrier)-SH + L-alanine. Catalyzes the removal of elemental sulfur atoms from cysteine to produce alanine. Seems to participate in the biosynthesis of the nitrogenase metalloclusters by providing the inorganic sulfur required for the Fe-S core formation. The sequence is that of Cysteine desulfurase from Azospirillum brasilense.